We begin with the raw amino-acid sequence, 131 residues long: Metalloproteinase inhibitor (131 aa).

A signal peptide spans methionine 1–alanine 29. Disulfide bonds link cysteine 33/cysteine 39 and cysteine 93/cysteine 98.

Its function is as follows. Inhibits microbial metallo-proteinases, such as thermolysin, but not serine, thiol, or carboxyl proteinases. In Streptomyces nigrescens, this protein is Metalloproteinase inhibitor (smpI).